Consider the following 142-residue polypeptide: Small ribosomal subunit protein uS12 (142 aa).

The disordered stretch occupies residues 1–44; that stretch reads MANGKYAARKLKKDRQKHRWSDTDYARRERGLGKKSDPLEGAPQ. Residues 7–18 are compositionally biased toward basic residues; the sequence is AARKLKKDRQKH. Residues 19 to 38 are compositionally biased toward basic and acidic residues; sequence RWSDTDYARRERGLGKKSDP.

The protein belongs to the universal ribosomal protein uS12 family. As to quaternary structure, part of the 30S ribosomal subunit.

Its function is as follows. With S4 and S5 plays an important role in translational accuracy. Located at the interface of the 30S and 50S subunits. The sequence is that of Small ribosomal subunit protein uS12 from Haloarcula marismortui (strain ATCC 43049 / DSM 3752 / JCM 8966 / VKM B-1809) (Halobacterium marismortui).